The sequence spans 161 residues: Nucleotide-binding protein BceJ2315_27070 (161 aa).

It belongs to the YajQ family.

Its function is as follows. Nucleotide-binding protein. This chain is Nucleotide-binding protein BceJ2315_27070, found in Burkholderia cenocepacia (strain ATCC BAA-245 / DSM 16553 / LMG 16656 / NCTC 13227 / J2315 / CF5610) (Burkholderia cepacia (strain J2315)).